The sequence spans 242 residues: Uridylate kinase (242 aa).

Residue 11 to 14 (KLSG) participates in ATP binding. Residues 19–24 (GDKGVG) form an involved in allosteric activation by GTP region. Gly53 is a binding site for UMP. Gly54 and Arg58 together coordinate ATP. Residues Asp73 and 134-141 (IGSPYFST) contribute to the UMP site. ATP-binding residues include Asn162, Tyr168, and Asp171.

The protein belongs to the UMP kinase family. In terms of assembly, homohexamer.

The protein localises to the cytoplasm. It carries out the reaction UMP + ATP = UDP + ADP. Its pathway is pyrimidine metabolism; CTP biosynthesis via de novo pathway; UDP from UMP (UMPK route): step 1/1. With respect to regulation, allosterically activated by GTP. Inhibited by UTP. Its function is as follows. Catalyzes the reversible phosphorylation of UMP to UDP. The protein is Uridylate kinase of Streptococcus agalactiae serotype III (strain NEM316).